Reading from the N-terminus, the 195-residue chain is Recombination protein RecR (195 aa).

The C4-type zinc-finger motif lies at cysteine 53–cysteine 68. In terms of domain architecture, Toprim spans glutamine 76–proline 171.

This sequence belongs to the RecR family.

Its function is as follows. May play a role in DNA repair. It seems to be involved in an RecBC-independent recombinational process of DNA repair. It may act with RecF and RecO. The sequence is that of Recombination protein RecR from Ehrlichia chaffeensis (strain ATCC CRL-10679 / Arkansas).